A 197-amino-acid polypeptide reads, in one-letter code: Holliday junction branch migration complex subunit RuvA (197 aa).

Residues 1–61 are domain I; sequence MYEYFEGTIT…ENGMTLYGFK (61 aa). Residues 62–140 are domain II; that stretch reads SQQDKVLFNK…NYVAENLFTE (79 aa). The interval 141 to 150 is flexible linker; that stretch reads DEPVESVFPA. Residues 150-197 form a domain III region; the sequence is ALEDALLALGALGYSQKEVDRIKPKLKKLPEMSADEYIKQGLGFLLKK.

Belongs to the RuvA family. Homotetramer. Forms an RuvA(8)-RuvB(12)-Holliday junction (HJ) complex. HJ DNA is sandwiched between 2 RuvA tetramers; dsDNA enters through RuvA and exits via RuvB. An RuvB hexamer assembles on each DNA strand where it exits the tetramer. Each RuvB hexamer is contacted by two RuvA subunits (via domain III) on 2 adjacent RuvB subunits; this complex drives branch migration. In the full resolvosome a probable DNA-RuvA(4)-RuvB(12)-RuvC(2) complex forms which resolves the HJ.

The protein resides in the cytoplasm. Functionally, the RuvA-RuvB-RuvC complex processes Holliday junction (HJ) DNA during genetic recombination and DNA repair, while the RuvA-RuvB complex plays an important role in the rescue of blocked DNA replication forks via replication fork reversal (RFR). RuvA specifically binds to HJ cruciform DNA, conferring on it an open structure. The RuvB hexamer acts as an ATP-dependent pump, pulling dsDNA into and through the RuvAB complex. HJ branch migration allows RuvC to scan DNA until it finds its consensus sequence, where it cleaves and resolves the cruciform DNA. This is Holliday junction branch migration complex subunit RuvA from Lactobacillus delbrueckii subsp. bulgaricus (strain ATCC BAA-365 / Lb-18).